A 438-amino-acid chain; its full sequence is Histidinol dehydrogenase (438 aa).

Residues Tyr138, Gln199, and Asn222 each coordinate NAD(+). Substrate contacts are provided by Ser245, Gln267, and His270. Residues Gln267 and His270 each coordinate Zn(2+). Residues Glu335 and His336 each act as proton acceptor in the active site. Substrate contacts are provided by His336, Asp369, Glu423, and His428. Zn(2+) is bound at residue Asp369. Position 428 (His428) interacts with Zn(2+).

The protein belongs to the histidinol dehydrogenase family. Requires Zn(2+) as cofactor.

The enzyme catalyses L-histidinol + 2 NAD(+) + H2O = L-histidine + 2 NADH + 3 H(+). It participates in amino-acid biosynthesis; L-histidine biosynthesis; L-histidine from 5-phospho-alpha-D-ribose 1-diphosphate: step 9/9. Functionally, catalyzes the sequential NAD-dependent oxidations of L-histidinol to L-histidinaldehyde and then to L-histidine. The sequence is that of Histidinol dehydrogenase from Burkholderia lata (strain ATCC 17760 / DSM 23089 / LMG 22485 / NCIMB 9086 / R18194 / 383).